A 217-amino-acid polypeptide reads, in one-letter code: Ribonuclease HII (217 aa).

The RNase H type-2 domain occupies 27-216 (SRIAGVDEAG…VKESIREGIC (190 aa)). A divalent metal cation is bound by residues aspartate 33, glutamate 34, and aspartate 126.

It belongs to the RNase HII family. Mn(2+) is required as a cofactor. It depends on Mg(2+) as a cofactor.

The protein resides in the cytoplasm. The catalysed reaction is Endonucleolytic cleavage to 5'-phosphomonoester.. Endonuclease that specifically degrades the RNA of RNA-DNA hybrids. This Chlamydia muridarum (strain MoPn / Nigg) protein is Ribonuclease HII (rnhB).